The chain runs to 129 residues: Transcription antitermination protein NusB (129 aa).

Belongs to the NusB family.

Functionally, involved in transcription antitermination. Required for transcription of ribosomal RNA (rRNA) genes. Binds specifically to the boxA antiterminator sequence of the ribosomal RNA (rrn) operons. This chain is Transcription antitermination protein NusB, found in Staphylococcus aureus (strain N315).